The following is a 498-amino-acid chain: Putative F-box/FBD/LRR-repeat protein At4g03220 (498 aa).

The F-box domain maps to Val-23 to Ile-71. 3 LRR repeats span residues Ser-148–Arg-172, Phe-175–Asp-200, and Ser-235–Ser-259. Residues Tyr-416–Ser-466 form the FBD domain.

This is Putative F-box/FBD/LRR-repeat protein At4g03220 from Arabidopsis thaliana (Mouse-ear cress).